Here is a 269-residue protein sequence, read N- to C-terminus: Hydroxyethylthiazole kinase (269 aa).

Met-46 serves as a coordination point for substrate. Arg-122 and Thr-168 together coordinate ATP. A substrate-binding site is contributed by Gly-195.

The protein belongs to the Thz kinase family. The cofactor is Mg(2+).

It carries out the reaction 5-(2-hydroxyethyl)-4-methylthiazole + ATP = 4-methyl-5-(2-phosphooxyethyl)-thiazole + ADP + H(+). It participates in cofactor biosynthesis; thiamine diphosphate biosynthesis; 4-methyl-5-(2-phosphoethyl)-thiazole from 5-(2-hydroxyethyl)-4-methylthiazole: step 1/1. Its function is as follows. Catalyzes the phosphorylation of the hydroxyl group of 4-methyl-5-beta-hydroxyethylthiazole (THZ). This is Hydroxyethylthiazole kinase from Chloroflexus aurantiacus (strain ATCC 29366 / DSM 635 / J-10-fl).